Reading from the N-terminus, the 494-residue chain is Probable malate:quinone oxidoreductase (494 aa).

This sequence belongs to the MQO family. Requires FAD as cofactor.

The enzyme catalyses (S)-malate + a quinone = a quinol + oxaloacetate. Its pathway is carbohydrate metabolism; tricarboxylic acid cycle; oxaloacetate from (S)-malate (quinone route): step 1/1. The polypeptide is Probable malate:quinone oxidoreductase (Kocuria rhizophila (strain ATCC 9341 / DSM 348 / NBRC 103217 / DC2201)).